Here is a 131-residue protein sequence, read N- to C-terminus: Small ribosomal subunit protein uS8 (131 aa).

This sequence belongs to the universal ribosomal protein uS8 family. Part of the 30S ribosomal subunit. Contacts proteins S5 and S12.

In terms of biological role, one of the primary rRNA binding proteins, it binds directly to 16S rRNA central domain where it helps coordinate assembly of the platform of the 30S subunit. This chain is Small ribosomal subunit protein uS8, found in Pelodictyon phaeoclathratiforme (strain DSM 5477 / BU-1).